The following is a 182-amino-acid chain: Large ribosomal subunit protein bL19m (182 aa).

The N-terminal 21 residues, 1–21 (MFNAKHFFNLGLGFQWLQKRG), are a transit peptide targeting the mitochondrion.

Belongs to the bacterial ribosomal protein bL19 family. Component of the mitochondrial large ribosomal subunit (mt-LSU). Mature yeast 74S mitochondrial ribosomes consist of a small (37S) and a large (54S) subunit. The 37S small subunit contains a 15S ribosomal RNA (15S mt-rRNA) and at least 32 different proteins. The 54S large subunit contains a 21S rRNA (21S mt-rRNA) and at least 45 different proteins.

Its subcellular location is the mitochondrion. Functionally, component of the mitochondrial ribosome (mitoribosome), a dedicated translation machinery responsible for the synthesis of mitochondrial genome-encoded proteins, including at least some of the essential transmembrane subunits of the mitochondrial respiratory chain. The mitoribosomes are attached to the mitochondrial inner membrane and translation products are cotranslationally integrated into the membrane. bL19m is essential for respiration. The polypeptide is Large ribosomal subunit protein bL19m (img1) (Schizosaccharomyces pombe (strain 972 / ATCC 24843) (Fission yeast)).